The chain runs to 124 residues: MTKKGSSNSSKQQQQQQQIIINNNAKVDEPIIKINVNVHPNSKESSIVSFEDQILSLRISEPPIDGKANIGVIEFLSKELNIRKSNIEVGKGSKSRNKSVEIDISSENITKDELFERIKSKLNN.

The disordered stretch occupies residues 1-22; it reads MTKKGSSNSSKQQQQQQQIIIN.

It belongs to the UPF0235 family.

This is UPF0235 protein from Dictyostelium discoideum (Social amoeba).